A 279-amino-acid polypeptide reads, in one-letter code: Syntaxin-21 (279 aa).

The interval 1-34 (MSFQDLEAGTRSPAPNRFTGGRQQRPSSRGDPSQ) is disordered. Residue S2 is modified to N-acetylserine. Over 2-258 (SFQDLEAGTR…AKTQRSNSSL (257 aa)) the chain is Cytoplasmic. Residues 21–31 (GRQQRPSSRGD) show a composition bias toward polar residues. Residues 65-94 (ELRDKLQKTRLQISELVKNTSAKLKEASEA) are a coiled coil. One can recognise a t-SNARE coiled-coil homology domain in the interval 186-248 (EAIIEEREQG…TQATVQLRKA (63 aa)). The helical; Anchor for type IV membrane protein transmembrane segment at 259–279 (TCLLILIFGIVLLIVIIVVLV) threads the bilayer.

The protein belongs to the syntaxin family. In terms of assembly, interacts with VTI11 and SYP51 to form a t-SNARE complex and with alpha-SNAP to form a 20S complex. A high level expression is seen in the roots while a low level expression is seen in the leaves.

It localises to the prevacuolar compartment membrane. Its function is as follows. May function in the docking or fusion of transport vesicles with the prevacuolar membrane. The protein is Syntaxin-21 (SYP21) of Arabidopsis thaliana (Mouse-ear cress).